We begin with the raw amino-acid sequence, 350 residues long: Guanine nucleotide-binding protein G(t) subunit alpha-1 (350 aa).

The tract at residues 1-21 is disordered; that stretch reads MGAGASAEEKHSRELEKKLKE. Glycine 2 carries N-myristoyl glycine lipidation. Over residues 7–21 the composition is skewed to basic and acidic residues; sequence AEEKHSRELEKKLKE. Residues 28 to 350 enclose the G-alpha domain; the sequence is RTVKLLLLGA…KENLKDCGLF (323 aa). Residues 31–44 are G1 motif; sequence KLLLLGAGESGKST. 36–43 contacts GTP; the sequence is GAGESGKS. Residue serine 43 coordinates Mg(2+). The residue at position 142 (tyrosine 142) is a Phosphotyrosine; by SRC. GTP contacts are provided by residues aspartate 146, 171 to 177, glycine 199, 265 to 268, and alanine 322; these read LRSRVKT and NKKD. The tract at residues 169–177 is G2 motif; that stretch reads DVLRSRVKT. Residue arginine 174 is modified to ADP-ribosylarginine; by cholera toxin. Threonine 177 is a binding site for Mg(2+). The tract at residues 192-201 is G3 motif; it reads FRMFDVGGQR. Positions 261–268 are G4 motif; sequence VLFLNKKD. The interval 320-325 is G5 motif; sequence TCATDT. The tract at residues 340-350 is interaction with RHO; that stretch reads IKENLKDCGLF. Cysteine 347 carries the ADP-ribosylcysteine; by pertussis toxin modification.

This sequence belongs to the G-alpha family. G(i/o/t/z) subfamily. Heterotrimeric G proteins are composed of 3 subunits alpha, beta and gamma. The alpha chain contains the guanine nucleotide binding site. Interacts with RHO. Interacts with RGS9 and PDE6G. Interacts (when myristoylated) with UNC119; interaction is required for localization in sensory neurons. In terms of tissue distribution, rod photoreceptor cells. Predominantly expressed in the retina followed by the ciliary body, iris and retinal pigment epithelium.

The protein localises to the cell projection. It is found in the cilium. The protein resides in the photoreceptor outer segment. Its subcellular location is the membrane. It localises to the photoreceptor inner segment. Its function is as follows. Functions as a signal transducer for the rod photoreceptor RHO. Required for normal RHO-mediated light perception by the retina. Guanine nucleotide-binding proteins (G proteins) function as transducers downstream of G protein-coupled receptors (GPCRs), such as the photoreceptor RHO. The alpha chain contains the guanine nucleotide binding site and alternates between an active, GTP-bound state and an inactive, GDP-bound state. Activated RHO promotes GDP release and GTP binding. Signaling is mediated via downstream effector proteins, such as cGMP-phosphodiesterase. The sequence is that of Guanine nucleotide-binding protein G(t) subunit alpha-1 (GNAT1) from Homo sapiens (Human).